A 400-amino-acid polypeptide reads, in one-letter code: Leucine-rich repeat flightless-interacting protein 2 (400 aa).

Disordered stretches follow at residues 1-28 (MGTP…SNID) and 53-119 (LERQ…LSEV). Ser-18 carries the post-translational modification Phosphoserine. The stretch at 29–71 (REAEARLAAKRAARAEARDIRMRELERQQKELDEKSDKQYAEN) forms a coiled coil. The span at 53-68 (LERQQKELDEKSDKQY) shows a compositional bias: basic and acidic residues. Positions 73 to 102 (TRPSSRNSASATTPLSGNSSRRVSGDTSSL) are enriched in polar residues. Phosphoserine occurs at positions 77, 80, 88, 92, and 96. Thr-99 is subject to Phosphothreonine. A phosphoserine mark is found at Ser-100 and Ser-101. Coiled coils occupy residues 106–202 (DTSL…LIEK) and 245–393 (LDVR…KANR).

It belongs to the LRRFIP family. Interacts with DVL3 and FLII. Weakly interacts with MYD88 in resting cells. Following LPS-stimulation, the interaction with MYD88 is rapidly enhanced; the complex gradually dissociates to basal levels after 6 hours of stimulation. Interaction with MYD88 is regulated by LPS-induced phosphorylation. In the presence of LPS, competes with FLII for MYD88-binding.

May function as activator of the canonical Wnt signaling pathway, in association with DVL3, upstream of CTNNB1/beta-catenin. Positively regulates Toll-like receptor (TLR) signaling in response to agonist probably by competing with the negative FLII regulator for MYD88-binding. The sequence is that of Leucine-rich repeat flightless-interacting protein 2 (LRRFIP2) from Bos taurus (Bovine).